The primary structure comprises 213 residues: Glycerol-3-phosphate acyltransferase (213 aa).

5 helical membrane passes run 3-23 (LLLF…LWIG), 68-88 (ILLP…GFFA), 112-132 (VLLG…VLVL), 134-154 (LFSM…LSVL), and 163-183 (LPNY…IIII).

The protein belongs to the PlsY family. As to quaternary structure, probably interacts with PlsX.

The protein resides in the cell membrane. It catalyses the reaction an acyl phosphate + sn-glycerol 3-phosphate = a 1-acyl-sn-glycero-3-phosphate + phosphate. It participates in lipid metabolism; phospholipid metabolism. Its function is as follows. Catalyzes the transfer of an acyl group from acyl-phosphate (acyl-PO(4)) to glycerol-3-phosphate (G3P) to form lysophosphatidic acid (LPA). This enzyme utilizes acyl-phosphate as fatty acyl donor, but not acyl-CoA or acyl-ACP. The sequence is that of Glycerol-3-phosphate acyltransferase from Streptococcus pyogenes serotype M28 (strain MGAS6180).